The primary structure comprises 124 residues: Seripauperin-15 (124 aa).

The first 20 residues, 1–20 (MVKLTSIAAGVAAIAAGVAA), serve as a signal peptide directing secretion.

This sequence belongs to the SRP1/TIP1 family. Seripauperin subfamily.

The protein is Seripauperin-15 (PAU15) of Saccharomyces cerevisiae (strain ATCC 204508 / S288c) (Baker's yeast).